We begin with the raw amino-acid sequence, 60 residues long: Mastoparan-VB2 (60 aa).

A signal peptide spans 1-27 (MKNTILLLFTAFIFLMGFFGMSADALA). 4 AXPX repeats span residues 27–30 (ADPK), 31–34 (ADPL), 35–38 (AGPF), and 41–44 (ADPD). A propeptide spanning residues 28–45 (DPKADPLAGPFPDADPDP) is cleaved from the precursor. Leucine amide is present on Leu59.

This sequence belongs to the MCD family. Mastoparan subfamily. Expressed by the venom gland.

The protein localises to the secreted. It is found in the target cell membrane. In terms of biological role, antimicrobial peptide. Shows activity against both Gram-positive and -negative bacteria, as well against fungi. Also promotes moderate mast cell degranulation. Does not show hemolytic activity on rabbit and human erythrocytes. Its mast cell degranulation activity may be related to the activation of G-protein coupled receptors in mast cells as well as interaction with other proteins located in cell endosomal membranes in the mast cells. The protein is Mastoparan-VB2 of Vespa bicolor (Black shield wasp).